We begin with the raw amino-acid sequence, 121 residues long: ATP synthase epsilon chain (121 aa).

It belongs to the ATPase epsilon chain family. F-type ATPases have 2 components, CF(1) - the catalytic core - and CF(0) - the membrane proton channel. CF(1) has five subunits: alpha(3), beta(3), gamma(1), delta(1), epsilon(1). CF(0) has three main subunits: a, b and c.

The protein resides in the cell membrane. Produces ATP from ADP in the presence of a proton gradient across the membrane. The protein is ATP synthase epsilon chain (atpC) of Mycobacterium bovis (strain ATCC BAA-935 / AF2122/97).